Consider the following 396-residue polypeptide: Phosphoglycerate kinase (396 aa).

Residues 21-23 (DIN), Arg36, 59-62 (HFGR), Arg114, and Arg147 each bind substrate. ATP is bound by residues Lys197, Glu319, and 349 to 352 (GGDT).

The protein belongs to the phosphoglycerate kinase family. In terms of assembly, monomer.

It localises to the cytoplasm. The catalysed reaction is (2R)-3-phosphoglycerate + ATP = (2R)-3-phospho-glyceroyl phosphate + ADP. It participates in carbohydrate degradation; glycolysis; pyruvate from D-glyceraldehyde 3-phosphate: step 2/5. This chain is Phosphoglycerate kinase, found in Jannaschia sp. (strain CCS1).